A 691-amino-acid polypeptide reads, in one-letter code: Protein phosphatase 1 regulatory subunit 37 (691 aa).

The interval 1 to 43 is disordered; it reads MEIAPQEAPPVPGADGDIEEAPAEAGSPSPASPPADGRLKAAA. Ser-50 and Ser-56 each carry phosphoserine. 5 LRR repeats span residues 220–240, 248–269, 277–297, 306–326, and 334–354; these read SLAVLHLENASLSGRPLMLLA, NLRELYLADNKLNGLQDSAQLG, SLQILDLRNNHVLDSGLAYIC, GLVTLVLWNNQLTHTGMAFLG, and SLETLNLGHNPIGNEGVRHLK. Residues 460–662 are disordered; sequence EREEKEQPPQ…PEVKGGSCGL (203 aa). Over residues 468–481 the composition is skewed to polar residues; that stretch reads PQLSASMPETTATE. The span at 505–523 shows a compositional bias: acidic residues; the sequence is SDSDSDSDGEEEEEEEGER. Ser-561 carries the post-translational modification Phosphoserine. 2 stretches are compositionally biased toward pro residues: residues 584-605 and 620-634; these read PASPTPPSPPPPPSPPASPSLP and PQPPPEPPRSGPPLP.

Belongs to the PPP1R37 family. Interacts with PPP1CA.

Its function is as follows. Inhibits phosphatase activity of protein phosphatase 1 (PP1) complexes. The chain is Protein phosphatase 1 regulatory subunit 37 (PPP1R37) from Homo sapiens (Human).